The following is a 245-amino-acid chain: 1-(5-phosphoribosyl)-5-[(5-phosphoribosylamino)methylideneamino] imidazole-4-carboxamide isomerase (245 aa).

Asp7 (proton acceptor) is an active-site residue. The Proton donor role is filled by Asp129.

It belongs to the HisA/HisF family.

It localises to the cytoplasm. The enzyme catalyses 1-(5-phospho-beta-D-ribosyl)-5-[(5-phospho-beta-D-ribosylamino)methylideneamino]imidazole-4-carboxamide = 5-[(5-phospho-1-deoxy-D-ribulos-1-ylimino)methylamino]-1-(5-phospho-beta-D-ribosyl)imidazole-4-carboxamide. It functions in the pathway amino-acid biosynthesis; L-histidine biosynthesis; L-histidine from 5-phospho-alpha-D-ribose 1-diphosphate: step 4/9. The protein is 1-(5-phosphoribosyl)-5-[(5-phosphoribosylamino)methylideneamino] imidazole-4-carboxamide isomerase of Psychromonas ingrahamii (strain DSM 17664 / CCUG 51855 / 37).